The sequence spans 28 residues: Kappa-buthitoxin-Tt2b (28 aa).

3 cysteine pairs are disulfide-bonded: C2/C24, C7/C20, and C11/C26.

Expressed by the venom gland.

It localises to the secreted. Functionally, blocks potassium channels Shaker-IR (with inactivation domain removed) and hKv1.2/KCNA2. The protein is Kappa-buthitoxin-Tt2b of Tityus trivittatus (Argentinean scorpion).